We begin with the raw amino-acid sequence, 530 residues long: Light-independent protochlorophyllide reductase subunit B (530 aa).

Residue D36 participates in [4Fe-4S] cluster binding. The Proton donor role is filled by D290. A substrate-binding site is contributed by G425 to L426. A disordered region spans residues L448–S483. Positions T458–S473 are enriched in polar residues.

The protein belongs to the ChlB/BchB/BchZ family. Protochlorophyllide reductase is composed of three subunits; ChlL, ChlN and ChlB. Forms a heterotetramer of two ChlB and two ChlN subunits. [4Fe-4S] cluster serves as cofactor.

It catalyses the reaction chlorophyllide a + oxidized 2[4Fe-4S]-[ferredoxin] + 2 ADP + 2 phosphate = protochlorophyllide a + reduced 2[4Fe-4S]-[ferredoxin] + 2 ATP + 2 H2O. It participates in porphyrin-containing compound metabolism; chlorophyll biosynthesis (light-independent). In terms of biological role, component of the dark-operative protochlorophyllide reductase (DPOR) that uses Mg-ATP and reduced ferredoxin to reduce ring D of protochlorophyllide (Pchlide) to form chlorophyllide a (Chlide). This reaction is light-independent. The NB-protein (ChlN-ChlB) is the catalytic component of the complex. The chain is Light-independent protochlorophyllide reductase subunit B from Prochlorococcus marinus (strain SARG / CCMP1375 / SS120).